Consider the following 435-residue polypeptide: Tol-Pal system protein TolB (435 aa).

Positions 1-20 (MRKIIAGVFIFVFLISNLYA) are cleaved as a signal peptide.

The protein belongs to the TolB family. As to quaternary structure, the Tol-Pal system is composed of five core proteins: the inner membrane proteins TolA, TolQ and TolR, the periplasmic protein TolB and the outer membrane protein Pal. They form a network linking the inner and outer membranes and the peptidoglycan layer.

It localises to the periplasm. Functionally, part of the Tol-Pal system, which plays a role in outer membrane invagination during cell division and is important for maintaining outer membrane integrity. The protein is Tol-Pal system protein TolB of Francisella tularensis subsp. mediasiatica (strain FSC147).